The sequence spans 301 residues: GTPase Era (301 aa).

The region spanning 7–175 is the Era-type G domain; it reads YCGFVAIVGR…AAIVRKHLPE (169 aa). Residues 15 to 22 form a G1 region; it reads GRPNVGKS. 15 to 22 is a GTP binding site; the sequence is GRPNVGKS. Residues 41-45 are G2; that stretch reads QTTRH. The G3 stretch occupies residues 62–65; sequence DTPG. GTP contacts are provided by residues 62–66 and 124–127; these read DTPGL and NKVD. Residues 124–127 are G4; sequence NKVD. A G5 region spans residues 154–156; it reads ISA. The 78-residue stretch at 206-283 folds into the KH type-2 domain; that stretch reads LGAELPYSVT…HLELWVKVKS (78 aa).

This sequence belongs to the TRAFAC class TrmE-Era-EngA-EngB-Septin-like GTPase superfamily. Era GTPase family. Monomer.

The protein resides in the cytoplasm. Its subcellular location is the cell inner membrane. Functionally, an essential GTPase that binds both GDP and GTP, with rapid nucleotide exchange. Plays a role in 16S rRNA processing and 30S ribosomal subunit biogenesis and possibly also in cell cycle regulation and energy metabolism. The polypeptide is GTPase Era (Klebsiella pneumoniae subsp. pneumoniae (strain ATCC 700721 / MGH 78578)).